Reading from the N-terminus, the 174-residue chain is Dual-action ribosomal maturation protein DarP (174 aa).

The protein belongs to the DarP family.

It localises to the cytoplasm. Its function is as follows. Member of a network of 50S ribosomal subunit biogenesis factors which assembles along the 30S-50S interface, preventing incorrect 23S rRNA structures from forming. Promotes peptidyl transferase center (PTC) maturation. The chain is Dual-action ribosomal maturation protein DarP from Pseudomonas aeruginosa (strain LESB58).